A 266-amino-acid chain; its full sequence is GTP cyclohydrolase FolE2 (266 aa).

The protein belongs to the GTP cyclohydrolase IV family.

The enzyme catalyses GTP + H2O = 7,8-dihydroneopterin 3'-triphosphate + formate + H(+). The protein operates within cofactor biosynthesis; 7,8-dihydroneopterin triphosphate biosynthesis; 7,8-dihydroneopterin triphosphate from GTP: step 1/1. Its function is as follows. Converts GTP to 7,8-dihydroneopterin triphosphate. The chain is GTP cyclohydrolase FolE2 from Syntrophotalea carbinolica (strain DSM 2380 / NBRC 103641 / GraBd1) (Pelobacter carbinolicus).